The chain runs to 387 residues: [LysW]-aminoadipate semialdehyde/glutamate semialdehyde transaminase (387 aa).

Pyridoxal 5'-phosphate is bound by residues 96–97 (GT) and Phe-123. A substrate-binding site is contributed by Arg-126. A pyridoxal 5'-phosphate-binding site is contributed by 207–210 (DEVQ). Lys-236 is subject to N6-(pyridoxal phosphate)lysine. Ser-264 provides a ligand contact to substrate. A pyridoxal 5'-phosphate-binding site is contributed by Thr-265.

It belongs to the class-III pyridoxal-phosphate-dependent aminotransferase family. LysJ subfamily. Homodimer. Pyridoxal 5'-phosphate serves as cofactor.

Its subcellular location is the cytoplasm. It catalyses the reaction [amino-group carrier protein]-C-terminal-gamma-(L-lysyl)-L-glutamate + 2-oxoglutarate = [amino-group carrier protein]-C-terminal-N-(1-carboxy-5-oxopentan-1-yl)-L-glutamine + L-glutamate. The catalysed reaction is [amino-group carrier protein]-C-terminal-gamma-(L-ornithyl)-L-glutamate + 2-oxoglutarate = [amino-group carrier protein]-C-terminal-gamma-(L-glutamyl-5-semialdehyde)-L-glutamate + L-glutamate. Its pathway is amino-acid biosynthesis; L-lysine biosynthesis via AAA pathway; L-lysine from L-alpha-aminoadipate (Thermus route): step 4/5. The protein operates within amino-acid biosynthesis; L-arginine biosynthesis. Its function is as follows. Involved in both the arginine and lysine biosynthetic pathways. The sequence is that of [LysW]-aminoadipate semialdehyde/glutamate semialdehyde transaminase from Sulfurisphaera tokodaii (strain DSM 16993 / JCM 10545 / NBRC 100140 / 7) (Sulfolobus tokodaii).